The following is a 212-amino-acid chain: Large ribosomal subunit protein uL3 (212 aa).

Glutamine 153 bears the N5-methylglutamine mark.

This sequence belongs to the universal ribosomal protein uL3 family. Part of the 50S ribosomal subunit. Forms a cluster with proteins L14 and L19. Methylated by PrmB.

Its function is as follows. One of the primary rRNA binding proteins, it binds directly near the 3'-end of the 23S rRNA, where it nucleates assembly of the 50S subunit. The polypeptide is Large ribosomal subunit protein uL3 (Shewanella denitrificans (strain OS217 / ATCC BAA-1090 / DSM 15013)).